Reading from the N-terminus, the 248-residue chain is ATP synthase subunit a, chloroplastic (248 aa).

5 helical membrane-spanning segments follow: residues 37-57 (AQVLITSWVVIVLLSGLAFVT), 96-116 (VPFIGTLFLFIFVSNWSGALF), 135-155 (INTTVALALLTSVAYFYAGLH), 200-220 (LVVAVLISLVPLVVPIPMMFL), and 221-241 (GLFTSAIQALIFATLAAAYIG).

Belongs to the ATPase A chain family. In terms of assembly, F-type ATPases have 2 components, CF(1) - the catalytic core - and CF(0) - the membrane proton channel. CF(1) has five subunits: alpha(3), beta(3), gamma(1), delta(1), epsilon(1). CF(0) has four main subunits: a, b, b' and c.

Its subcellular location is the plastid. It localises to the chloroplast thylakoid membrane. Key component of the proton channel; it plays a direct role in the translocation of protons across the membrane. The chain is ATP synthase subunit a, chloroplastic from Psilotum nudum (Whisk fern).